Reading from the N-terminus, the 231-residue chain is Non-fluorescent flavoprotein (231 aa).

This sequence belongs to the bacterial luciferase oxidoreductase family. In terms of assembly, homodimer. The cofactor is FMN.

The chain is Non-fluorescent flavoprotein (luxF) from Photobacterium phosphoreum.